Here is a 406-residue protein sequence, read N- to C-terminus: Peptidase T (406 aa).

His-78 serves as a coordination point for Zn(2+). Residue Asp-80 is part of the active site. Asp-139 is a binding site for Zn(2+). Glu-173 serves as the catalytic Proton acceptor. Zn(2+) contacts are provided by Glu-174, Asp-196, and His-378.

The protein belongs to the peptidase M20B family. Requires Zn(2+) as cofactor.

The protein localises to the cytoplasm. It carries out the reaction Release of the N-terminal residue from a tripeptide.. Cleaves the N-terminal amino acid of tripeptides. This is Peptidase T from Clostridium perfringens (strain ATCC 13124 / DSM 756 / JCM 1290 / NCIMB 6125 / NCTC 8237 / Type A).